The sequence spans 238 residues: ATP-dependent dethiobiotin synthetase BioD (238 aa).

ATP is bound at residue 12 to 17 (EVGKTV). Thr-16 is a Mg(2+) binding site. Residue Lys-37 is part of the active site. Thr-41 is a substrate binding site. ATP-binding positions include Asp-50, 109–112 (EGAG), 170–171 (GS), and 200–202 (PAG). Residues Asp-50 and Glu-109 each contribute to the Mg(2+) site.

This sequence belongs to the dethiobiotin synthetase family. Homodimer. Requires Mg(2+) as cofactor.

Its subcellular location is the cytoplasm. The enzyme catalyses (7R,8S)-7,8-diammoniononanoate + CO2 + ATP = (4R,5S)-dethiobiotin + ADP + phosphate + 3 H(+). It participates in cofactor biosynthesis; biotin biosynthesis; biotin from 7,8-diaminononanoate: step 1/2. Its function is as follows. Catalyzes a mechanistically unusual reaction, the ATP-dependent insertion of CO2 between the N7 and N8 nitrogen atoms of 7,8-diaminopelargonic acid (DAPA, also called 7,8-diammoniononanoate) to form a ureido ring. The chain is ATP-dependent dethiobiotin synthetase BioD from Streptomyces coelicolor (strain ATCC BAA-471 / A3(2) / M145).